Here is a 742-residue protein sequence, read N- to C-terminus: MSDSCPVAHEGNTQSTSESENPVIPSPTPAANRPRNNRDWWPNQPELSVLHAHTSKSNPMGEDFDYAEEFAKLDVEALKRDVIDLMTTSQDWWPADYGHYGGLFIRMSWHAAGTYRIADGRGGGGQGAQRFAPLNSWPDNANLDKARRLLWPVKQKYGKQISWADLLVFAGNCALESMGFKTFGFGFGREDIWEPEEMYWGPEDTWLGDERYSGDRELSGPLGAVQMGLIYVNPEGPNGQPDPLAAARDIRETFSRMAMNDVETAALIAGGHTFGKTHGAGDADLVGPEPEGAPIEQQGLGWKSAYGTGVGKDAITSGLEVVWTPTPTKWDNSFLEVLYGYEWELTKSPAGAWQWTAKDGAGAGTIPDPFDSSAGRAPTMLTTDLSLRIDPAYEKITRRWLDHPEEFAEEFAKAWYKLLHRDMGPVTRYLGPWVPEAQLWQDPVPAVDHQLIGDSEIAALKGKILDSGLSIPQLVSTAWASAATHRSTDMRGGANGARIRLAPQKDWEINSPAELSTILQTLEQIQQDFNSSQSGGVKVSLADVIVLAGAAAVEKAAKNAGHDVTVPFTPGRTDATQEQTDVESFAVLEPKADGFRNYLRAGEKLPAEALLVDRAYMLNLTAPEMTVLVGGLRALNANFGQTKHGVFTDRPEALTNDFFVNLLDMGTEWKGASSAENVYEGTDRVTGAAKWTATAVDLVFGSNSQLRALAEVYAADDAQQKFVQDFVSAWNKVMNLDRFDLD.

The disordered stretch occupies residues 1-43 (MSDSCPVAHEGNTQSTSESENPVIPSPTPAANRPRNNRDWWPN). Residues 11–20 (GNTQSTSESE) are compositionally biased toward polar residues. The tryptophyl-tyrosyl-methioninium (Trp-Tyr) (with M-257) cross-link spans 109–231 (WHAAGTYRIA…LGAVQMGLIY (123 aa)). The active-site Proton acceptor is the His-110. The tryptophyl-tyrosyl-methioninium (Tyr-Met) (with W-109) cross-link spans 231-257 (YVNPEGPNGQPDPLAAARDIRETFSRM). His-272 provides a ligand contact to heme b.

It belongs to the peroxidase family. Peroxidase/catalase subfamily. In terms of assembly, homodimer or homotetramer. The cofactor is heme b. Formation of the three residue Trp-Tyr-Met cross-link is important for the catalase, but not the peroxidase activity of the enzyme.

It catalyses the reaction H2O2 + AH2 = A + 2 H2O. The catalysed reaction is 2 H2O2 = O2 + 2 H2O. Functionally, bifunctional enzyme with both catalase and broad-spectrum peroxidase activity. The polypeptide is Catalase-peroxidase (Rhodococcus jostii (strain RHA1)).